Here is a 455-residue protein sequence, read N- to C-terminus: Glycylpeptide N-tetradecanoyltransferase (455 aa).

38–41 contributes to the tetradecanoyl-CoA binding site; the sequence is HKFW. The interval 168–204 is myristoyl CoA-binding; sequence INFLCVHKQLRSKRLTPVLIKEITRRVNKCDIWHALY. Leucine 455 (proton acceptor; via carboxylate) is an active-site residue.

The protein belongs to the NMT family. Monomer. Post-translationally, the N-terminus is blocked.

It localises to the cytoplasm. The enzyme catalyses N-terminal glycyl-[protein] + tetradecanoyl-CoA = N-tetradecanoylglycyl-[protein] + CoA + H(+). Its activity is regulated as follows. Inhibited by diethylpyrocarbonate. Competitively inhibited by S-(2-oxo)pentadecyl-CoA, a non hydrolysable myristoyl-CoA analog, and by SC-58272, a peptidomimetic derived from the N-terminal sequence of a natural substrate. Its function is as follows. Adds a myristoyl group to the N-terminal glycine residue of certain cellular proteins. Substrate specificity requires an N-terminal glycine in the nascent polypeptide substrates. Uncharged amino acids are preferred at position 2 while neutral residues are favored at positions 3 and 4. Ser is present at position 5 in almost all known N-myristoyl proteins and Lys is commonly encountered at postion 6. The protein is Glycylpeptide N-tetradecanoyltransferase (NMT1) of Saccharomyces cerevisiae (strain ATCC 204508 / S288c) (Baker's yeast).